The primary structure comprises 413 residues: Serine/threonine transporter SstT (413 aa).

10 consecutive transmembrane segments (helical) span residues 18-38 (LSLV…ALFA), 52-72 (FVSA…MASI), 86-106 (ILFL…IASM), 119-139 (IAVS…LSVV), 145-165 (ALMN…GVAI), 196-216 (LGIF…ALIG), 221-241 (LAVL…LIVF), 292-312 (VSIP…ITVL), 320-340 (LGIA…AICA), and 360-380 (LFGI…IIGV).

This sequence belongs to the dicarboxylate/amino acid:cation symporter (DAACS) (TC 2.A.23) family.

Its subcellular location is the cell inner membrane. It carries out the reaction L-serine(in) + Na(+)(in) = L-serine(out) + Na(+)(out). The enzyme catalyses L-threonine(in) + Na(+)(in) = L-threonine(out) + Na(+)(out). Functionally, involved in the import of serine and threonine into the cell, with the concomitant import of sodium (symport system). The chain is Serine/threonine transporter SstT from Pseudomonas fluorescens (strain Pf0-1).